Consider the following 164-residue polypeptide: Protein SprT (164 aa).

A SprT-like domain is found at 14–156 (QQAETFFKRT…LCRRCREPLV (143 aa)). His-69 provides a ligand contact to Zn(2+). The active site involves Glu-70. A Zn(2+)-binding site is contributed by His-73.

It belongs to the SprT family. The cofactor is Zn(2+).

It localises to the cytoplasm. The chain is Protein SprT from Pseudomonas savastanoi pv. phaseolicola (strain 1448A / Race 6) (Pseudomonas syringae pv. phaseolicola (strain 1448A / Race 6)).